We begin with the raw amino-acid sequence, 115 residues long: Putative septation protein SpoVG (115 aa).

Positions 88-115 (PGTIATSEVSSQLEESDSDKTLSEDLKA) are disordered. A compositionally biased stretch (polar residues) spans 91–100 (IATSEVSSQL). The span at 105–115 (SDKTLSEDLKA) shows a compositional bias: basic and acidic residues.

The protein belongs to the SpoVG family.

In terms of biological role, could be involved in septation. This chain is Putative septation protein SpoVG, found in Macrococcus caseolyticus (strain JCSC5402) (Macrococcoides caseolyticum).